The following is a 248-amino-acid chain: 2,3-bisphosphoglycerate-dependent phosphoglycerate mutase (248 aa).

Residues 8-15 (RHGESTWN), 21-22 (TG), Arg60, 87-90 (ERHY), Lys98, 114-115 (RR), and 183-184 (GN) each bind substrate. His9 acts as the Tele-phosphohistidine intermediate in catalysis. Glu87 functions as the Proton donor/acceptor in the catalytic mechanism.

The protein belongs to the phosphoglycerate mutase family. BPG-dependent PGAM subfamily. In terms of assembly, homodimer.

It catalyses the reaction (2R)-2-phosphoglycerate = (2R)-3-phosphoglycerate. It participates in carbohydrate degradation; glycolysis; pyruvate from D-glyceraldehyde 3-phosphate: step 3/5. Catalyzes the interconversion of 2-phosphoglycerate and 3-phosphoglycerate. This Burkholderia lata (strain ATCC 17760 / DSM 23089 / LMG 22485 / NCIMB 9086 / R18194 / 383) protein is 2,3-bisphosphoglycerate-dependent phosphoglycerate mutase.